The primary structure comprises 379 residues: Guanine nucleotide-binding protein subunit alpha-12 (379 aa).

The S-palmitoyl cysteine moiety is linked to residue Cys-11. The G-alpha domain maps to 54–379 (RLVKILLLGA…QENLKDIMLQ (326 aa)). Residues 57-70 (KILLLGAGESGKST) are G1 motif. Residues 65 to 70 (ESGKST) and 200 to 203 (LLAR) contribute to the GTP site. Ser-69 serves as a coordination point for Mg(2+). The G2 motif stretch occupies residues 198-206 (DILLARKAT). Thr-206 is a Mg(2+) binding site. Thr-206 bears the Phosphothreonine mark. A G3 motif region spans residues 221 to 230 (FKMVDVGGQR). The segment at 290-297 (ILFLNKMD) is G4 motif. Residues 294–297 (NKMD) and Ala-351 each bind GTP. Residues 349 to 354 (TTAIDT) are G5 motif.

This sequence belongs to the G-alpha family. G(12) subfamily. In terms of assembly, g proteins are composed of 3 units; alpha, beta and gamma. The alpha chain contains the guanine nucleotide binding site. Interacts with UBXD5. Interacts (in GTP-bound form) with PPP5C (via TPR repeats); activates PPP5C phosphatase activity and translocates PPP5C to the cell membrane. Interacts with RGS22. Interacts (via N-terminus) with NAPA; the interaction promotes CDH5 localization to plasma membrane. Interacts with CTNND1 (via N-terminus); the interaction regulates CDH1-mediated cell-cell adhesion. Interacts with PPP2R1A; the interaction promotes protein phosphatase 2A activation causing dephosphorylation of MAPT. Interacts (in GTP-bound form) with ARHGEF1. Interacts (in GTP-bound form) with ARHGEF11 (via RGS domain). Interacts (in GTP-bound form) with ARHGEF12 (via RGS domain).

The protein resides in the cell membrane. It localises to the lateral cell membrane. It is found in the cytoplasm. In terms of biological role, guanine nucleotide-binding proteins (G proteins) are involved as modulators or transducers in various transmembrane signaling systems. Activates effector molecule RhoA by binding and activating RhoGEFs (ARHGEF12/LARG). GNA12-dependent Rho signaling subsequently regulates transcription factor AP-1 (activating protein-1). GNA12-dependent Rho signaling also regulates protein phosphatese 2A activation causing dephosphorylation of its target proteins. Promotes tumor cell invasion and metastasis by activating RhoA/ROCK signaling pathway and up-regulating pro-inflammatory cytokine production. Inhibits CDH1-mediated cell adhesion in process independent from Rho activation. Together with NAPA promotes CDH5 localization to plasma membrane. May play a role in the control of cell migration through the TOR signaling cascade. The protein is Guanine nucleotide-binding protein subunit alpha-12 (Gna12) of Rattus norvegicus (Rat).